The sequence spans 38 residues: Photosystem II reaction center protein T (38 aa).

A helical membrane pass occupies residues alanine 3–phenylalanine 23.

The protein belongs to the PsbT family. PSII is composed of 1 copy each of membrane proteins PsbA, PsbB, PsbC, PsbD, PsbE, PsbF, PsbH, PsbI, PsbJ, PsbK, PsbL, PsbM, PsbT, PsbY, PsbZ, Psb30/Ycf12, at least 3 peripheral proteins of the oxygen-evolving complex and a large number of cofactors. It forms dimeric complexes.

The protein localises to the plastid. The protein resides in the chloroplast thylakoid membrane. In terms of biological role, found at the monomer-monomer interface of the photosystem II (PS II) dimer, plays a role in assembly and dimerization of PSII. PSII is a light-driven water plastoquinone oxidoreductase, using light energy to abstract electrons from H(2)O, generating a proton gradient subsequently used for ATP formation. This Secale cereale (Rye) protein is Photosystem II reaction center protein T.